The chain runs to 184 residues: Outer-membrane lipoprotein carrier protein (184 aa).

A signal peptide spans 1-19 (MKAFLKILMVLIFVSVAYA).

Belongs to the LolA family. Monomer.

It localises to the periplasm. Functionally, participates in the translocation of lipoproteins from the inner membrane to the outer membrane. Only forms a complex with a lipoprotein if the residue after the N-terminal Cys is not an aspartate (The Asp acts as a targeting signal to indicate that the lipoprotein should stay in the inner membrane). The protein is Outer-membrane lipoprotein carrier protein of Helicobacter pylori (strain P12).